Consider the following 1299-residue polypeptide: Tenascin-N (1299 aa).

Positions 1–28 (MSLQEMFRFPMGLLLGSVLLVASAPATL) are cleaved as a signal peptide. 3 EGF-like domains span residues 167-198 (ERLA…ADCG), 199-229 (YPAC…EDCS), and 230-260 (EKRC…LDCA). 9 cysteine pairs are disulfide-bonded: Cys171-Cys181, Cys175-Cys186, Cys188-Cys197, Cys202-Cys212, Cys206-Cys217, Cys219-Cys228, Cys233-Cys243, Cys237-Cys248, and Cys250-Cys259. 9 Fibronectin type-III domains span residues 264–352 (TPQG…TDLA), 353–444 (VLGT…TEID), 445–532 (SPTN…TEID), 533–623 (SPAN…IDSP), 624–709 (KNLV…TDID), 710–800 (SPQN…IDSP), 801–886 (QNLV…TEID), 887–976 (GPKN…LDPP), and 977–1063 (RNLR…VGAR). The disordered stretch occupies residues 605–624 (GDRESKKADTNAPTDIDSPK). Residues 960 to 977 (QESKKADTKAQTELDPPR) show a composition bias toward basic and acidic residues. Positions 960 to 982 (QESKKADTKAQTELDPPRNLRPS) are disordered. In terms of domain architecture, Fibrinogen C-terminal spans 1061–1278 (GARFPHPSDC…YVELKIRPHG (218 aa)). Residue Asn1149 is glycosylated (N-linked (GlcNAc...) asparagine).

The protein belongs to the tenascin family. In terms of assembly, homohexamer. In terms of tissue distribution, not detected in normal adult mammary tissues or brain but expressed in most breast tumors and brain tumors, such as glioblastomas, astrocytomas and oligodendrogliomas, tested. In brain tumors, detected around the endothelial cell layer of the clood vessels.

It is found in the secreted. It localises to the extracellular space. The protein resides in the extracellular matrix. Its function is as follows. Extracellular matrix protein that seems to be a ligand for ITGA8:ITGB1, ITGAV:ITGB1 and ITGA4:ITGB1. Involved in neurite outgrowth and cell migration in hippocampal explants. During endochondral bone formation, inhibits proliferation and differentiation of proteoblasts mediated by canonical WNT signaling. In tumors, stimulates angiogenesis by elongation, migration and sprouting of endothelial cells. Expressed in most mammary tumors, may facilitate tumorigenesis by supporting the migratory behavior of breast cancer cells. The chain is Tenascin-N from Homo sapiens (Human).